We begin with the raw amino-acid sequence, 464 residues long: Glutamate--tRNA ligase (464 aa).

Residues 11–21 carry the 'HIGH' region motif; it reads PSPTGFIHLGN. Residues 243–247 carry the 'KMSKS' region motif; sequence KMSKR. K246 lines the ATP pocket.

Belongs to the class-I aminoacyl-tRNA synthetase family. Glutamate--tRNA ligase type 1 subfamily. In terms of assembly, monomer.

It is found in the cytoplasm. The enzyme catalyses tRNA(Glu) + L-glutamate + ATP = L-glutamyl-tRNA(Glu) + AMP + diphosphate. Functionally, catalyzes the attachment of glutamate to tRNA(Glu) in a two-step reaction: glutamate is first activated by ATP to form Glu-AMP and then transferred to the acceptor end of tRNA(Glu). This Polaromonas naphthalenivorans (strain CJ2) protein is Glutamate--tRNA ligase.